A 910-amino-acid chain; its full sequence is Dynein axonemal assembly factor 1 homolog (910 aa).

5 LRR repeats span residues 43–64 (GLKCLWLECNAISNISGLDHQS), 65–86 (QLRCLYLHNNLIKKIENLQHCK), 87–108 (QLDTLNLSHNHIAKIENCGSDI), 111–132 (VLNTLNISHNYLKSIESLAELR), and 136–157 (FVSVLDISHNRIEDIAIVKVLA). One can recognise an LRRCT domain in the interval 171–209 (PVVNDIPSYRKTLILECKSLTYLDSRPVFDKDRACAEAW). Basic and acidic residues predominate over residues 217–230 (ERKEHQRWKKEEQR). 6 disordered regions span residues 217-275 (ERKE…GDFE), 297-332 (TKGDTQQAQKLAEERKASTNSVDYITGSDSNSDPTL), 344-399 (SRAC…GSIL), 620-642 (EQVPDEVEANDKASDATIDPVDQ), 662-682 (QVEVGPSDPKDATTSKPIPEE), and 855-910 (EELE…QGDH). Over residues 314-331 (STNSVDYITGSDSNSDPT) the composition is skewed to polar residues. Positions 380–389 (SLSDSSSSSS) are enriched in low complexity. A compositionally biased stretch (basic and acidic residues) spans 620 to 633 (EQVPDEVEANDKAS). Acidic residues predominate over residues 855–865 (EELEELNEEED). Residues 866-878 (PALKEAGDFKHDE) are compositionally biased toward basic and acidic residues.

It belongs to the DNAAF1 family.

It is found in the cell projection. It localises to the cilium. Functionally, cilium-specific protein required for cilia structures. The sequence is that of Dynein axonemal assembly factor 1 homolog from Anopheles gambiae (African malaria mosquito).